Reading from the N-terminus, the 305-residue chain is C alpha-dehydrogenase (305 aa).

Residue 10–34 (FITGGASGAGFGQAKVFGQAGAKIV) coordinates NAD(+). Ser-144 lines the substrate pocket. The active-site Proton acceptor is Tyr-157.

This sequence belongs to the short-chain dehydrogenases/reductases (SDR) family.

The protein operates within secondary metabolite metabolism; lignin degradation. In terms of biological role, catalyzes the C alpha dehydrogenation of arylglycerol-beta-aryl ether (C alpha alcohol type) (compound IV). In Sphingobium sp. (strain NBRC 103272 / SYK-6), this protein is C alpha-dehydrogenase (ligD).